Reading from the N-terminus, the 117-residue chain is Basic phospholipase A2 pseudexin B chain (117 aa).

Disulfide bonds link Cys11–Cys71, Cys27–Cys117, Cys29–Cys45, Cys44–Cys98, Cys51–Cys91, Cys60–Cys84, and Cys78–Cys89. Ca(2+) is bound by residues Tyr28, Gly30, and Gly32. His48 is a catalytic residue. Asp49 lines the Ca(2+) pocket. Asp92 is an active-site residue.

Belongs to the phospholipase A2 family. Group I subfamily. D49 sub-subfamily. The cofactor is Ca(2+). In terms of tissue distribution, expressed by the venom gland.

It is found in the secreted. It catalyses the reaction a 1,2-diacyl-sn-glycero-3-phosphocholine + H2O = a 1-acyl-sn-glycero-3-phosphocholine + a fatty acid + H(+). Functionally, PLA2 catalyzes the calcium-dependent hydrolysis of the 2-acyl groups in 3-sn-phosphoglycerides. The polypeptide is Basic phospholipase A2 pseudexin B chain (Pseudechis porphyriacus (Red-bellied black snake)).